The following is a 424-amino-acid chain: Serine--tRNA ligase (424 aa).

229–231 (TAE) lines the L-serine pocket. 260–262 (RRE) is an ATP binding site. Position 283 (E283) interacts with L-serine. 347-350 (EVSS) provides a ligand contact to ATP. Residue S383 participates in L-serine binding.

The protein belongs to the class-II aminoacyl-tRNA synthetase family. Type-1 seryl-tRNA synthetase subfamily. Homodimer. The tRNA molecule binds across the dimer.

Its subcellular location is the cytoplasm. It catalyses the reaction tRNA(Ser) + L-serine + ATP = L-seryl-tRNA(Ser) + AMP + diphosphate + H(+). The enzyme catalyses tRNA(Sec) + L-serine + ATP = L-seryl-tRNA(Sec) + AMP + diphosphate + H(+). The protein operates within aminoacyl-tRNA biosynthesis; selenocysteinyl-tRNA(Sec) biosynthesis; L-seryl-tRNA(Sec) from L-serine and tRNA(Sec): step 1/1. Its function is as follows. Catalyzes the attachment of serine to tRNA(Ser). Is also able to aminoacylate tRNA(Sec) with serine, to form the misacylated tRNA L-seryl-tRNA(Sec), which will be further converted into selenocysteinyl-tRNA(Sec). This Roseiflexus sp. (strain RS-1) protein is Serine--tRNA ligase.